We begin with the raw amino-acid sequence, 331 residues long: Adenosine deaminase (331 aa).

The Zn(2+) site is built by His-12 and His-14. Substrate contacts are provided by His-14, Asp-16, and Gly-170. Zn(2+) is bound at residue His-197. Glu-200 serves as the catalytic Proton donor. Asp-278 contacts Zn(2+). Asp-279 contributes to the substrate binding site.

It belongs to the metallo-dependent hydrolases superfamily. Adenosine and AMP deaminases family. Adenosine deaminase subfamily. It depends on Zn(2+) as a cofactor.

The catalysed reaction is adenosine + H2O + H(+) = inosine + NH4(+). It carries out the reaction 2'-deoxyadenosine + H2O + H(+) = 2'-deoxyinosine + NH4(+). Catalyzes the hydrolytic deamination of adenosine and 2-deoxyadenosine. In Shewanella baltica (strain OS155 / ATCC BAA-1091), this protein is Adenosine deaminase.